Reading from the N-terminus, the 811-residue chain is Vacuolar protein sorting-associated protein 70 (811 aa).

Residues 1–21 (MRMIQRERKREKEEGQLKERT) are compositionally biased toward basic and acidic residues. The tract at residues 1–63 (MRMIQRERKR…MNDSFTLTSR (63 aa)) is disordered. The N-linked (GlcNAc...) asparagine glycan is linked to asparagine 55. Residues 90–110 (FMYLILASLLLYMGFVAAFAP) form a helical membrane-spanning segment. N-linked (GlcNAc...) asparagine glycosylation is present at asparagine 237. Positions 334 to 367 (FSDTPGDPTTPGYPSKDSDTEHMSPVGRVPRIPS) are disordered. Residues 336 to 345 (DTPGDPTTPG) show a composition bias toward low complexity. 3 residues coordinate Zn(2+): histidine 445, aspartate 456, and aspartate 522. 2 N-linked (GlcNAc...) asparagine glycosylation sites follow: asparagine 568 and asparagine 599. Histidine 607 lines the Zn(2+) pocket. The N-linked (GlcNAc...) asparagine glycan is linked to asparagine 670.

This sequence belongs to the peptidase M28 family. M28B subfamily. Zn(2+) is required as a cofactor.

It localises to the membrane. Its function is as follows. Involved in vacuolar protein sorting. This Saccharomyces cerevisiae (strain ATCC 204508 / S288c) (Baker's yeast) protein is Vacuolar protein sorting-associated protein 70 (VPS70).